A 341-amino-acid polypeptide reads, in one-letter code: MTKPIILTGDRPTGKLHIGHYVGSLKNRVLLQEEDKYDMFVFLADQQALTDHAKDPQTIVESIGNVALDYLAVGLDPNKSTIFIQSQIPELAELSMYYMNLVSLARLERNPTVKTEISQKGFGESIPTGFLVYPIAQAADITAFKANYVPVGTDQKPMIEQTREIVRSFNNAYNCDVLVEPEGIYPENERAGRLPGLDGNAKMSKSLNNGIYLADDADTLRKKVMSMYTDPDHIRVEDPGKIEGNMVFHYLDVFGRPEDAQEIADMKERYQRGGLGDVKTKRYLLEILERELGPIRERRIEFAKDMGEVYNMIQKGSERAREVAGQTLSEVKGAMGLHYFN.

ATP contacts are provided by residues 11–13 (RPT) and 19–20 (GH). A 'HIGH' region motif is present at residues 12–20 (PTGKLHIGH). Asp140 contacts L-tryptophan. Residues 152–154 (GTD), Leu194, and 202–206 (KMSKS) contribute to the ATP site. Positions 202–206 (KMSKS) match the 'KMSKS' region motif.

Belongs to the class-I aminoacyl-tRNA synthetase family. Homodimer.

Its subcellular location is the cytoplasm. It catalyses the reaction tRNA(Trp) + L-tryptophan + ATP = L-tryptophyl-tRNA(Trp) + AMP + diphosphate + H(+). Catalyzes the attachment of tryptophan to tRNA(Trp). The sequence is that of Tryptophan--tRNA ligase from Streptococcus pneumoniae serotype 4 (strain ATCC BAA-334 / TIGR4).